Consider the following 310-residue polypeptide: Homoserine kinase (310 aa).

Residue 95 to 105 participates in ATP binding; sequence PQSRGLGSSAA.

It belongs to the GHMP kinase family. Homoserine kinase subfamily.

It is found in the cytoplasm. It catalyses the reaction L-homoserine + ATP = O-phospho-L-homoserine + ADP + H(+). The protein operates within amino-acid biosynthesis; L-threonine biosynthesis; L-threonine from L-aspartate: step 4/5. In terms of biological role, catalyzes the ATP-dependent phosphorylation of L-homoserine to L-homoserine phosphate. The protein is Homoserine kinase of Corynebacterium kroppenstedtii (strain DSM 44385 / JCM 11950 / CIP 105744 / CCUG 35717).